The chain runs to 635 residues: MAKKSAENGIYSVSGDEKKGPLIAPGPDGAPAKGDGPVGLGTPGGRLAVPPRETWTRQMDFIMSCVGFAVGLGNVWRFPYLCYKNGGGVFLIPYVLIALVGGIPIFFLEISLGQFMKAGSINVWNICPLFKGLGYASMVIVFYCNTYYIMVLAWGFYYLVKSFTTTLPWATCGHTWNTPDCVEIFRHEDCANASLANLTCDQLADRRSPVIEFWENKVLRLSGGLEVPGALNWEVTLCLLACWVLVYFCVWKGVKSTGKIVYFTATFPYVVLVVLLVRGVLLPGALDGIIYYLKPDWSKLGSPQVWIDAGTQIFFSYAIGLGALTALGSYNRFNNNCYKDAIILALINSGTSFFAGFVVFSILGFMAAEQGVHISKVAESGPGLAFIAYPRAVTLMPVAPLWAALFFFMLLLLGLDSQFVGVEGFITGLLDLLPASYYFRFQREISVALCCALCFVIDLSMVTDGGMYVFQLFDYYSASGTTLLWQAFWECVVVAWVYGADRFMDDIACMIGYRPCPWMKWCWSFFTPLVCMGIFIFNVVYYEPLVYNNTYVYPWWGEAMGWAFALSSMLCVPLHLLGCLLRAKGTMAERWQHLTQPIWGLHHLEYRAQDADVRGLTTLTPVSESSKVVVVESVM.

A disordered region spans residues 1–28 (MAKKSAENGIYSVSGDEKKGPLIAPGPD). The Cytoplasmic segment spans residues 1–60 (MAKKSAENGIYSVSGDEKKGPLIAPGPDGAPAKGDGPVGLGTPGGRLAVPPRETWTRQMD). Threonine 42 carries the phosphothreonine modification. Residues 61–81 (FIMSCVGFAVGLGNVWRFPYL) traverse the membrane as a helical segment. Over 82-87 (CYKNGG) the chain is Extracellular. Residues 88–108 (GVFLIPYVLIALVGGIPIFFL) form a helical membrane-spanning segment. Residues 109–138 (EISLGQFMKAGSINVWNICPLFKGLGYASM) lie on the Cytoplasmic side of the membrane. A helical membrane pass occupies residues 139–159 (VIVFYCNTYYIMVLAWGFYYL). Over 160–230 (VKSFTTTLPW…LSGGLEVPGA (71 aa)) the chain is Extracellular. Asparagine 192 and asparagine 197 each carry an N-linked (GlcNAc...) asparagine glycan. Residues 231 to 251 (LNWEVTLCLLACWVLVYFCVW) traverse the membrane as a helical segment. At 252-269 (KGVKSTGKIVYFTATFPY) the chain is on the cytoplasmic side. A helical membrane pass occupies residues 270 to 290 (VVLVVLLVRGVLLPGALDGII). The Extracellular segment spans residues 291 to 304 (YYLKPDWSKLGSPQ). A helical membrane pass occupies residues 305 to 325 (VWIDAGTQIFFSYAIGLGALT). Residues 326 to 341 (ALGSYNRFNNNCYKDA) lie on the Cytoplasmic side of the membrane. The helical transmembrane segment at 342–362 (IILALINSGTSFFAGFVVFSI) threads the bilayer. The Extracellular portion of the chain corresponds to 363–394 (LGFMAAEQGVHISKVAESGPGLAFIAYPRAVT). Residues 395 to 415 (LMPVAPLWAALFFFMLLLLGL) form a helical membrane-spanning segment. Residues 416-444 (DSQFVGVEGFITGLLDLLPASYYFRFQRE) are Cytoplasmic-facing. A helical transmembrane segment spans residues 445-465 (ISVALCCALCFVIDLSMVTDG). The Extracellular portion of the chain corresponds to 466-479 (GMYVFQLFDYYSAS). A helical membrane pass occupies residues 480-500 (GTTLLWQAFWECVVVAWVYGA). Over 501-520 (DRFMDDIACMIGYRPCPWMK) the chain is Cytoplasmic. The helical transmembrane segment at 521 to 541 (WCWSFFTPLVCMGIFIFNVVY) threads the bilayer. Topologically, residues 542–560 (YEPLVYNNTYVYPWWGEAM) are extracellular. Asparagine 548 carries N-linked (GlcNAc...) asparagine glycosylation. Residues 561-581 (GWAFALSSMLCVPLHLLGCLL) traverse the membrane as a helical segment. Residues 582-635 (RAKGTMAERWQHLTQPIWGLHHLEYRAQDADVRGLTTLTPVSESSKVVVVESVM) lie on the Cytoplasmic side of the membrane. A phosphothreonine mark is found at threonine 617 and threonine 620. Serine 623 is modified (phosphoserine).

The protein belongs to the sodium:neurotransmitter symporter (SNF) (TC 2.A.22) family. SLC6A8 subfamily. Glycosylated. In terms of tissue distribution, predominantly expressed in skeletal muscle and kidney. Also found in brain, heart, colon, testis and prostate.

The protein resides in the cell membrane. It localises to the apical cell membrane. The enzyme catalyses creatine(out) + chloride(out) + 2 Na(+)(out) = creatine(in) + chloride(in) + 2 Na(+)(in). Its function is as follows. Creatine:sodium symporter which mediates the uptake of creatine. Plays an important role in supplying creatine to the brain via the blood-brain barrier. This is Sodium- and chloride-dependent creatine transporter 1 (SLC6A8) from Homo sapiens (Human).